The chain runs to 763 residues: F-box protein SKP2 (763 aa).

The F-box domain occupies 54–100; it reads KSSLMCLPTKVLLLILRTLDFNTLVTLCQVNSRFYNLITNEFLFQNV. Position 594 is a phosphothreonine (threonine 594).

Interacts with SKP1. Component of the probable SCF(SKP2) complex containing CDC53, SKP1, RBX1 and SKP2. May interact with ribosomes.

It is found in the cytoplasm. Its pathway is protein modification; protein ubiquitination. Its function is as follows. Substrate recognition component of a SCF (SKP1-CUL1-F-box protein) E3 ubiquitin-protein ligase complex which mediates the ubiquitination and subsequent proteasomal degradation of target proteins. Probably recognizes and binds to phosphorylated target proteins. Regulates protein levels of sulfur metabolism enzymes. The SCF(SKP2) complex may regulate some transcription factors or regulators of cysteine and methionine biosynthesis. This is F-box protein SKP2 (SKP2) from Saccharomyces cerevisiae (strain ATCC 204508 / S288c) (Baker's yeast).